A 214-amino-acid chain; its full sequence is Thiamine pyrophosphokinase (214 aa).

The protein belongs to the thiamine pyrophosphokinase family.

It catalyses the reaction thiamine + ATP = thiamine diphosphate + AMP + H(+). Its pathway is cofactor biosynthesis; thiamine diphosphate biosynthesis; thiamine diphosphate from thiamine: step 1/1. In terms of biological role, catalyzes the ATP-dependent phosphorylation of thiamine to thiamine pyrophosphate. Is involved in thiamine salvage. In Bacillus subtilis (strain 168), this protein is Thiamine pyrophosphokinase.